A 346-amino-acid chain; its full sequence is GTPase Obg (346 aa).

The 159-residue stretch at methionine 1 to leucine 159 folds into the Obg domain. The interval lysine 122–glycine 147 is disordered. Basic and acidic residues predominate over residues serine 132–glycine 147. In terms of domain architecture, OBG-type G spans alanine 160–arginine 336. GTP contacts are provided by residues glycine 166–serine 173, phenylalanine 191–threonine 195, aspartate 218–glycine 221, threonine 288–aspartate 291, and serine 317–alanine 319. Positions 173 and 193 each coordinate Mg(2+).

Belongs to the TRAFAC class OBG-HflX-like GTPase superfamily. OBG GTPase family. In terms of assembly, monomer. Mg(2+) is required as a cofactor.

It is found in the cytoplasm. Functionally, an essential GTPase which binds GTP, GDP and possibly (p)ppGpp with moderate affinity, with high nucleotide exchange rates and a fairly low GTP hydrolysis rate. Plays a role in control of the cell cycle, stress response, ribosome biogenesis and in those bacteria that undergo differentiation, in morphogenesis control. This is GTPase Obg from Sorangium cellulosum (strain So ce56) (Polyangium cellulosum (strain So ce56)).